The following is a 360-amino-acid chain: Ubiquitin carboxyl-terminal hydrolase MIY1 (360 aa).

The active-site Nucleophile is the Cys-28. Residue His-216 is the Proton acceptor of the active site. A disordered region spans residues 317–360 (KRKIHSHKKNSEIHAPVKKDKFKRRSSLLNAKASEKEKSECVVM). 2 stretches are compositionally biased toward basic and acidic residues: residues 325–335 (KNSEIHAPVKK) and 349–360 (ASEKEKSECVVM).

This sequence belongs to the MINDY deubiquitinase family. FAM63 subfamily.

Its subcellular location is the cytoplasm. It carries out the reaction Thiol-dependent hydrolysis of ester, thioester, amide, peptide and isopeptide bonds formed by the C-terminal Gly of ubiquitin (a 76-residue protein attached to proteins as an intracellular targeting signal).. Its function is as follows. Hydrolase that can specifically remove 'Lys-48'-linked conjugated ubiquitin from proteins. Has endodeubiquitinase activity. This chain is Ubiquitin carboxyl-terminal hydrolase MIY1, found in Saccharomyces cerevisiae (strain ATCC 204508 / S288c) (Baker's yeast).